We begin with the raw amino-acid sequence, 701 residues long: Elongation factor G (701 aa).

In terms of domain architecture, tr-type G spans 8–290 (SLYRNIGISA…AVIDYLPAPT (283 aa)). GTP-binding positions include 17-24 (AHIDAGKT), 88-92 (DTPGH), and 142-145 (NKMD).

This sequence belongs to the TRAFAC class translation factor GTPase superfamily. Classic translation factor GTPase family. EF-G/EF-2 subfamily.

The protein localises to the cytoplasm. In terms of biological role, catalyzes the GTP-dependent ribosomal translocation step during translation elongation. During this step, the ribosome changes from the pre-translocational (PRE) to the post-translocational (POST) state as the newly formed A-site-bound peptidyl-tRNA and P-site-bound deacylated tRNA move to the P and E sites, respectively. Catalyzes the coordinated movement of the two tRNA molecules, the mRNA and conformational changes in the ribosome. The sequence is that of Elongation factor G from Haemophilus ducreyi (strain 35000HP / ATCC 700724).